Reading from the N-terminus, the 37-residue chain is Defensin-A (37 aa).

3 disulfide bridges follow: Cys-4–Cys-25, Cys-10–Cys-33, and Cys-14–Cys-35.

It is found in the secreted. Functionally, has antibacterial activity against M.luteus and E.coli. This is Defensin-A from Mytilus edulis (Blue mussel).